A 303-amino-acid chain; its full sequence is Agmatinase (303 aa).

Mn(2+)-binding residues include H126, D149, H151, D153, D230, and D232.

It belongs to the arginase family. Agmatinase subfamily. It depends on Mn(2+) as a cofactor.

It catalyses the reaction agmatine + H2O = urea + putrescine. Functionally, catalyzes the formation of putrescine from agmatine. In Blochmanniella floridana, this protein is Agmatinase (speB).